The following is a 203-amino-acid chain: uncharacterized protein (203 aa).

The next 3 membrane-spanning stretches (helical) occupy residues 60–80, 114–134, and 157–177; these read IIDMILGAVTISLVIIVFFLY, WFQLKYLLLVSMTAFSFYFCT, and LQLGWICTTALLFYFYDALIL. 192 to 199 is a binding site for ATP; that stretch reads GAMSEGKT.

The protein resides in the membrane. This is an uncharacterized protein from Saccharomyces cerevisiae (strain ATCC 204508 / S288c) (Baker's yeast).